Here is a 233-residue protein sequence, read N- to C-terminus: Large ribosomal subunit protein uL1 (233 aa).

This sequence belongs to the universal ribosomal protein uL1 family. Part of the 50S ribosomal subunit.

Its function is as follows. Binds directly to 23S rRNA. The L1 stalk is quite mobile in the ribosome, and is involved in E site tRNA release. In terms of biological role, protein L1 is also a translational repressor protein, it controls the translation of the L11 operon by binding to its mRNA. The sequence is that of Large ribosomal subunit protein uL1 from Shewanella piezotolerans (strain WP3 / JCM 13877).